Here is a 303-residue protein sequence, read N- to C-terminus: Ribonuclease HIII (303 aa).

An RNase H type-2 domain is found at 85 to 302; that stretch reads CSLIGSDEVG…TKKAYQLLKK (218 aa). Residues Asp-91, Glu-92, and Asp-196 each contribute to the a divalent metal cation site.

It belongs to the RNase HII family. RnhC subfamily. Requires Mn(2+) as cofactor. It depends on Mg(2+) as a cofactor.

The protein resides in the cytoplasm. It carries out the reaction Endonucleolytic cleavage to 5'-phosphomonoester.. Functionally, endonuclease that specifically degrades the RNA of RNA-DNA hybrids. The chain is Ribonuclease HIII from Streptococcus mutans serotype c (strain ATCC 700610 / UA159).